A 265-amino-acid polypeptide reads, in one-letter code: MEDKKEEGESEIQEHGPEHWFSKWERQCLAEAEQEDQPEEEAEQSQQKLWHLFQNSATAVAQLYKDRVCQQQGLSLWVPFQNAATAVTNLYKESVDAHQRSFDLGIQIGYQRRNKDVLAWVKKRRRTIRREDLISFLCGKVPPPRNSRAPPRLTVVSPNRATPTETGSSVETDLQPFREAIALHGLSGAMASISVRSSTPGSPTHVSGSSNTGRRRNGLHDVDLNTFISEEMALHLDNGGTRKRSSAQCGDVITDSPTHKRNRMI.

Disordered regions lie at residues 1–22 (MEDK…HWFS), 145–170 (RNSR…GSSV), 195–218 (VRSS…RRNG), and 240–265 (GTRK…NRMI). Composition is skewed to polar residues over residues 156–170 (VSPN…GSSV) and 195–212 (VRSS…SSNT).

This sequence belongs to the TAPR1 family. As to quaternary structure, oligomer.

It localises to the nucleus. Its subcellular location is the cytoplasm. Its function is as follows. Acts as a central player within a network of stress response pathways promoting cellular adaptability. Functions as a negative regulator of TP53/P53 in the cellular response to telomere erosion and probably also DNA damage. This Xenopus laevis (African clawed frog) protein is HUWE1-associated protein modifying stress responses.